The following is a 231-amino-acid chain: Flagellar L-ring protein (231 aa).

Positions 1–18 (MNRLLSLFALGGAVLLAG) are cleaved as a signal peptide. Cysteine 19 is lipidated: N-palmitoyl cysteine. The S-diacylglycerol cysteine moiety is linked to residue cysteine 19.

Belongs to the FlgH family. In terms of assembly, the basal body constitutes a major portion of the flagellar organelle and consists of four rings (L,P,S, and M) mounted on a central rod.

The protein resides in the cell outer membrane. The protein localises to the bacterial flagellum basal body. In terms of biological role, assembles around the rod to form the L-ring and probably protects the motor/basal body from shearing forces during rotation. This chain is Flagellar L-ring protein, found in Pseudomonas putida (strain W619).